The chain runs to 126 residues: Cystatin-C (126 aa).

A signal peptide spans 1–18; that stretch reads MKMLVFPVLAALFAVGLG. Residues 22–115 form the Cystatin domain; it reads GAPRDINISE…CTFSVWSRPW (94 aa). A Secondary area of contact motif is present at residues 64–68; sequence QVVSG. 2 disulfides stabilise this stretch: Cys-82–Cys-92 and Cys-106–Cys-126.

It belongs to the cystatin family. In terms of tissue distribution, ubiquitously expressed in normal tissues including brain, eye, gill, heart, gullet, liver, spleen, stomach, pyloric ceca, intestine, kidney and muscle. Expressed, but not up-regulated, in lipopolysaccharide (LPS)-stimulated tissues including kidney, spleen, muscle and gill.

Its subcellular location is the secreted. Functionally, thiol protease inhibitor. Has high papain inhibitory activity and inhibits to a lesser extent fish cathepsins L, S, K, F, X and bovine cathepsin B in vitro. The sequence is that of Cystatin-C from Paralichthys olivaceus (Bastard halibut).